A 184-amino-acid polypeptide reads, in one-letter code: Ribosome-recycling factor (184 aa).

Belongs to the RRF family.

The protein localises to the cytoplasm. Its function is as follows. Responsible for the release of ribosomes from messenger RNA at the termination of protein biosynthesis. May increase the efficiency of translation by recycling ribosomes from one round of translation to another. The chain is Ribosome-recycling factor from Caldicellulosiruptor bescii (strain ATCC BAA-1888 / DSM 6725 / KCTC 15123 / Z-1320) (Anaerocellum thermophilum).